The sequence spans 274 residues: Energy-coupling factor transporter ATP-binding protein EcfA1 (274 aa).

One can recognise an ABC transporter domain in the interval Cys-9–Asp-240. Gly-41–Ser-48 is an ATP binding site.

Belongs to the ABC transporter superfamily. Energy-coupling factor EcfA family. In terms of assembly, forms a stable energy-coupling factor (ECF) transporter complex composed of 2 membrane-embedded substrate-binding proteins (S component), 2 ATP-binding proteins (A component) and 2 transmembrane proteins (T component).

The protein localises to the cell membrane. Its function is as follows. ATP-binding (A) component of a common energy-coupling factor (ECF) ABC-transporter complex. Unlike classic ABC transporters this ECF transporter provides the energy necessary to transport a number of different substrates. This Mycoplasma genitalium (strain ATCC 33530 / DSM 19775 / NCTC 10195 / G37) (Mycoplasmoides genitalium) protein is Energy-coupling factor transporter ATP-binding protein EcfA1.